Here is a 104-residue protein sequence, read N- to C-terminus: Ig lambda-3 chain C region (104 aa).

The 94-residue stretch at 6-99 (PTLTMFPPSP…EGDTVEKSLS (94 aa)) folds into the Ig-like domain. C27 and C85 are joined by a disulfide.

This is Ig lambda-3 chain C region (Iglc3) from Mus musculus (Mouse).